The following is a 216-amino-acid chain: uncharacterized protein (216 aa).

2 residues coordinate S-adenosyl-L-methionine: G56 and E77.

This sequence belongs to the methyltransferase superfamily. YrrT family.

Could be a S-adenosyl-L-methionine-dependent methyltransferase. This is an uncharacterized protein from Alkaliphilus oremlandii (strain OhILAs) (Clostridium oremlandii (strain OhILAs)).